We begin with the raw amino-acid sequence, 258 residues long: (S)-hydroxynitrile lyase (258 aa).

One can recognise an AB hydrolase-1 domain in the interval 5 to 242 (HFVLIHTICH…GGDHKLQLTK (238 aa)). The 2-hydroxy-2-methylpropanenitrile site is built by Thr-11 and Ser-80. 3 residues coordinate acetone: Thr-11, Ser-80, and Cys-81. Ser-80 serves as the catalytic Proton donor/acceptor. The active-site Proton donor/acceptor is His-236.

Belongs to the AB hydrolase superfamily. Hydroxynitrile lyase family. In terms of assembly, homotetramer.

It carries out the reaction a monosubstituted aliphatic (S)-hydroxynitrile = an aldehyde + hydrogen cyanide. The enzyme catalyses a disubstituted aliphatic (S)-hydroxynitrile = a ketone + hydrogen cyanide. It catalyses the reaction an aromatic (S)-hydroxynitrile = an aromatic aldehyde + hydrogen cyanide. The catalysed reaction is 2-hydroxy-2-methylpropanenitrile = acetone + hydrogen cyanide. It carries out the reaction butan-2-one + hydrogen cyanide = 2-hydroxy-2-methylbutanenitrile. The enzyme catalyses pentan-2-one + hydrogen cyanide = (2S)-2-hydroxy-2-methylpentanenitrile. It catalyses the reaction hexan-2-one + hydrogen cyanide = (2S)-2-hydroxy-2-methylhexanenitrile. The catalysed reaction is heptan-2-one + hydrogen cyanide = (2S)-2-hydroxy-2-methylheptanenitrile. It carries out the reaction 4-methylpentan-2-one + hydrogen cyanide = (2S)-2-hydroxy-2,4-dimethylpentanenitrile. The enzyme catalyses 3,3-dimethylbutan-2-one + hydrogen cyanide = (2S)-2-hydroxy-2-methyl-3,3-dimethylbutanenitrile. It catalyses the reaction acetophenone + hydrogen cyanide = (2S)-2-hydroxy-2-phenylpropanenitrile. The catalysed reaction is propanal + hydrogen cyanide = (2S)-2-hydroxybutanenitrile. It carries out the reaction pentanal + hydrogen cyanide = (2S)-2-hydroxyhexanenitrile. The enzyme catalyses 2-methylpropanal + hydrogen cyanide = (2S)-2-hydroxy-3-methylbutanenitrile. It catalyses the reaction 2,2-dimethylpropanal + hydrogen cyanide = (2S)-2-hydroxy-3,3-dimethylbutanenitrile. The catalysed reaction is acrolein + hydrogen cyanide = (2S)-2-hydroxybut-3-enenitrile. It carries out the reaction (2E)-but-2-enal + hydrogen cyanide = (2S,3E)-2-hydroxypent-3-enenitrile. The enzyme catalyses (E)-hex-2-enal + hydrogen cyanide = (2S,3E)-2-hydroxyhept-3-enenitrile. It catalyses the reaction cyclohexanecarbaldehyde + hydrogen cyanide = (2S)-2-cyclohexyl-2-hydroxyacetonitrile. The catalysed reaction is benzaldehyde + hydrogen cyanide = (S)-mandelonitrile. It carries out the reaction 4-methoxybenzaldehyde + hydrogen cyanide = (2S)-2-hydroxy-2-(4-methoxyphenyl)acetonitrile. The enzyme catalyses piperonal + hydrogen cyanide = (2S)-2-(2H-1,3-benzodioxol-5-yl)-2-hydroxyacetonitrile. It catalyses the reaction formylthiophene + hydrogen cyanide = (2R)-2-hydroxy-2-(thiophen-2-yl)acetonitrile. The catalysed reaction is 3-formylthiophene + hydrogen cyanide = (2S)-2-hydroxy-2-(thiophen-3-yl)acetonitrile. It carries out the reaction furan-3-carbaldehyde + hydrogen cyanide = (2S)-2-(furan-3-yl)-2-hydroxyacetonitrile. Involved in cyanogenesis, the release of HCN from cyanogenic glycosides in injured tissues; the release of toxic HCN is believed to play a central role in the defense mechanism of plants against herbivores and microbial attack. Decomposes a variety of cyanohydrins (alpha-hydroxynitriles) into HCN and the corresponding aldehydes or ketones; two natural substrates are 2-hydroxy-2-methylpropanenitrile (acetone cyanohydrin) and 2-hydroxy-2-methylbutanenitrile (2-butanone cyanohydrin), but in vitro can also act on 2-hydroxy-2-methylpentanenitrile (2-pentanone cyanohydrin) and mandelonitrile. Is also able to catalyze the reverse reaction in vitro, leading to the stereospecific synthesis of aliphatic, aromatic, and heterocyclic cyanohydrins, important intermediates in the production of various agrochemicals or pharmaceuticals. This chain is (S)-hydroxynitrile lyase, found in Manihot esculenta (Cassava).